The primary structure comprises 199 residues: Golgi to ER traffic protein 1 (199 aa).

Residues 1 to 11 (MLLPDLHPYTI) lie on the Lumenal side of the membrane. The chain crosses the membrane as a helical span at residues 12–31 (LLSIFLVLVVKQLVATIGKS). Topologically, residues 32 to 115 (TIQEFVWLVY…SIDKASNALI (84 aa)) are cytoplasmic. A coiled-coil region spans residues 76-116 (YAKWTKLNRQADKLSAELQKLNQEIQQQKSSIDKASNALIL). The chain crosses the membrane as a helical span at residues 116–136 (LVLTTLPIWIARVFYRKTHLF). Residues 137–160 (YIRQGIFPKYVEWVLALPFLPNGA) are Lumenal-facing. A helical membrane pass occupies residues 161–177 (VGLTIWMFAVNSVVSNF). Topologically, residues 178–199 (SFLVSFPFAKRVSKPVRDTKVE) are cytoplasmic.

Belongs to the WRB/GET1 family. As to quaternary structure, component of the Golgi to ER traffic (GET) complex, which is composed of GET1, GET2 and GET3. Within the complex, GET1 and GET2 form a heterotetramer which is stabilized by phosphatidylinositol binding and which binds to the GET3 homodimer.

Its subcellular location is the endoplasmic reticulum membrane. The protein resides in the golgi apparatus membrane. Functionally, required for the post-translational delivery of tail-anchored (TA) proteins to the endoplasmic reticulum. Together with GET2, acts as a membrane receptor for soluble GET3, which recognizes and selectively binds the transmembrane domain of TA proteins in the cytosol. The GET complex cooperates with the HDEL receptor ERD2 to mediate the ATP-dependent retrieval of resident ER proteins that contain a C-terminal H-D-E-L retention signal from the Golgi to the ER. The sequence is that of Golgi to ER traffic protein 1 from Candida albicans (strain WO-1) (Yeast).